The sequence spans 376 residues: MKILIDENMPYAAELFSGLGEVIAKSGRTLTADDLIDVDALMIRSVTKVNAELIEKANKLKFVGTATAGMDHVDQALLKEKGIFFTAAPGCNKVGVAEYVLSCLMVLAQQHGFSIFDKTFGIVGAGQVGSYLAQCLDALNISYLLNDPIKEQEGDSRSFVALDELLEKSDVITLHTPITRDGEYPTHHLIGQKTLSKLRNDQILINAARGPVVDNQALKQRLLKQDGFKAVLDVFEFEPDVDMELLPLLSFATPHIAGYGLEGKARGTTMIFNFYCEFLKRNERADPQTLLPIAPIPNVTLNQQWDHSTLHNLIQLVYDVRKDDAVFRKEIATVGAFDKMRKDYWDRREYSAITITGTQCCDLTPLQQLGFTIEEV.

Residues S45 and T67 each contribute to the substrate site. NAD(+) is bound by residues 127–128, D147, and T176; that span reads QV. R209 is a catalytic residue. D233 is a binding site for NAD(+). Residue E238 is part of the active site. Residue H255 is the Proton donor of the active site. Position 258 (G258) interacts with NAD(+). Y259 contacts substrate.

This sequence belongs to the D-isomer specific 2-hydroxyacid dehydrogenase family. PdxB subfamily. Homodimer.

The protein localises to the cytoplasm. It catalyses the reaction 4-phospho-D-erythronate + NAD(+) = (R)-3-hydroxy-2-oxo-4-phosphooxybutanoate + NADH + H(+). Its pathway is cofactor biosynthesis; pyridoxine 5'-phosphate biosynthesis; pyridoxine 5'-phosphate from D-erythrose 4-phosphate: step 2/5. Functionally, catalyzes the oxidation of erythronate-4-phosphate to 3-hydroxy-2-oxo-4-phosphonooxybutanoate. This chain is Erythronate-4-phosphate dehydrogenase, found in Aliivibrio fischeri (strain ATCC 700601 / ES114) (Vibrio fischeri).